Here is a 243-residue protein sequence, read N- to C-terminus: Ubiquinone biosynthesis O-methyltransferase (243 aa).

Positions 44, 64, 85, and 129 each coordinate S-adenosyl-L-methionine.

It belongs to the methyltransferase superfamily. UbiG/COQ3 family.

It carries out the reaction a 3-demethylubiquinol + S-adenosyl-L-methionine = a ubiquinol + S-adenosyl-L-homocysteine + H(+). The enzyme catalyses a 3-(all-trans-polyprenyl)benzene-1,2-diol + S-adenosyl-L-methionine = a 2-methoxy-6-(all-trans-polyprenyl)phenol + S-adenosyl-L-homocysteine + H(+). It participates in cofactor biosynthesis; ubiquinone biosynthesis. In terms of biological role, O-methyltransferase that catalyzes the 2 O-methylation steps in the ubiquinone biosynthetic pathway. In Erwinia tasmaniensis (strain DSM 17950 / CFBP 7177 / CIP 109463 / NCPPB 4357 / Et1/99), this protein is Ubiquinone biosynthesis O-methyltransferase.